The following is a 369-amino-acid chain: Peridinin-chlorophyll a-binding protein 2, chloroplastic (369 aa).

The transit peptide at methionine 1 to alanine 56 directs the protein to the chloroplast. 2 consecutive repeat copies span residues aspartate 57–glycine 219 and aspartate 220–arginine 369.

Homotrimer.

The protein localises to the plastid. Its subcellular location is the chloroplast. In terms of biological role, water-soluble antenna for capture of solar energy in the blue-green range. Peridinin is an asymmetric carotenoid. This is Peridinin-chlorophyll a-binding protein 2, chloroplastic from Amphidinium carterae (Dinoflagellate).